Reading from the N-terminus, the 100-residue chain is MPRPKKCRNLSCRAPYSMLKPNGIPSVELEKIHIDADEFEALNLGDVQKMSQLDAAASMGISRQTFGYLLASARKKVATAITQGHGLVLPQSTDTKREVL.

It belongs to the UPF0251 family.

The polypeptide is UPF0251 protein swp_0615 (Shewanella piezotolerans (strain WP3 / JCM 13877)).